A 114-amino-acid chain; its full sequence is Non-specific lipid-transfer protein 1 (114 aa).

The N-terminal stretch at 1–23 (MEMVSKIACFVLLCMVVVAPHAE) is a signal peptide. 4 cysteine pairs are disulfide-bonded: C27–C73, C37–C50, C51–C96, and C71–C110.

The protein belongs to the plant LTP family.

Functionally, plant non-specific lipid-transfer proteins transfer phospholipids as well as galactolipids across membranes. May play a role in wax or cutin deposition in the cell walls of expanding epidermal cells and certain secretory tissues. This is Non-specific lipid-transfer protein 1 (LTP1) from Solanum pennellii (Tomato).